Consider the following 519-residue polypeptide: Aldehyde dehydrogenase X, mitochondrial (519 aa).

The transit peptide at 1–19 (MLNARFLVPRLLCLQGRTT) directs the protein to the mitochondrion. The residue at position 53 (Lys-53) is an N6-acetyllysine. Lys-54 is subject to N6-acetyllysine; alternate. At Lys-54 the chain carries N6-succinyllysine; alternate. 264 to 269 (GSTEVG) contacts NAD(+). Residue Glu-287 is the Proton acceptor of the active site. Cys-321 acts as the Nucleophile in catalysis. An N6-acetyllysine; alternate mark is found at Lys-366, Lys-385, Lys-401, and Lys-428. Residues Lys-366, Lys-385, Lys-401, and Lys-428 each carry the N6-succinyllysine; alternate modification. At Lys-431 the chain carries N6-acetyllysine.

It belongs to the aldehyde dehydrogenase family. In terms of assembly, homotetramer.

The protein resides in the mitochondrion matrix. It carries out the reaction an aldehyde + NAD(+) + H2O = a carboxylate + NADH + 2 H(+). It functions in the pathway alcohol metabolism; ethanol degradation; acetate from ethanol: step 2/2. Its function is as follows. ALDHs play a major role in the detoxification of alcohol-derived acetaldehyde. They are involved in the metabolism of corticosteroids, biogenic amines, neurotransmitters, and lipid peroxidation. This Rattus norvegicus (Rat) protein is Aldehyde dehydrogenase X, mitochondrial (Aldh1b1).